The chain runs to 95 residues: Co-chaperonin GroES (95 aa).

This sequence belongs to the GroES chaperonin family. As to quaternary structure, heptamer of 7 subunits arranged in a ring. Interacts with the chaperonin GroEL.

It localises to the cytoplasm. Functionally, together with the chaperonin GroEL, plays an essential role in assisting protein folding. The GroEL-GroES system forms a nano-cage that allows encapsulation of the non-native substrate proteins and provides a physical environment optimized to promote and accelerate protein folding. GroES binds to the apical surface of the GroEL ring, thereby capping the opening of the GroEL channel. This Streptococcus equi subsp. equi (strain 4047) protein is Co-chaperonin GroES.